Here is a 266-residue protein sequence, read N- to C-terminus: Short-chain dehydrogenase/reductase AacuF (266 aa).

The NADP(+) site is built by L13, D57, and N85. Active-site proton donor residues include S145 and Y164. NADP(+) is bound by residues Y164, K168, and V198. The active-site Lowers pKa of active site Tyr is K168.

This sequence belongs to the short-chain dehydrogenases/reductases (SDR) family.

It functions in the pathway secondary metabolite biosynthesis. Functionally, short-chain dehydrogenase/reductase; part of the gene cluster that mediates the biosynthesis of the tetrahydroxanthone dimer secalonic acid D. The pathway begins with the synthesis of atrochrysone thioester by the polyketide synthase AacuL. The atrochrysone carboxyl ACP thioesterase AacuM then breaks the thioester bond and releases the atrochrysone carboxylic acid from AacuL. Atrochrysone carboxylic acid is decarboxylated by the decarboxylase AacuI, and oxidized by the anthrone oxygenase AacuG to yield emodin. Emodin is then reduced to emodin hydroquinone by a yet unidentified oxidoreductase. A-ring reduction by the short chain dehydrogenase AacuN, dehydration by the scytalone dehydratase-like protein AacuK and probable spontaneous re-oxidation, results in overall deoxygenation to chrysophanol. Baeyer-Villiger oxidation by the Baeyer-Villiger monooxygenase (BVMO) AacuH then yields monodictyphenone. Monodictyphenone is transformed into compounds with the tetrahydroxanthone skeleton via methylesterification by the methyltransferase AacuQ, followed by the action of the flavin-dependent monooxygenase AacuC, the isomerase AacuP, and the short chain dehydrogenase/reductase AacuF or AacuD. AacuF and AacuD should accept the same compound as a substrate but perform the ketoreduction with a different stereoselectivity, thus yielding blennolides B and A, respectively. In the final step of the biosynthesis, the cytochrome P450 monooxygenase AacuE accepts blennolide B and/or blennolide A to conduct the dimerization reaction to furnish the tetrahydroxanthone dimers, secalonic acids D, B, and F. This Aspergillus aculeatus (strain ATCC 16872 / CBS 172.66 / WB 5094) protein is Short-chain dehydrogenase/reductase AacuF.